Here is a 276-residue protein sequence, read N- to C-terminus: Diaminopimelate epimerase (276 aa).

Positions 11, 44, and 64 each coordinate substrate. Cysteine 73 serves as the catalytic Proton donor. Substrate-binding positions include 74 to 75 (GN), asparagine 157, asparagine 190, and 208 to 209 (ER). Cysteine 217 functions as the Proton acceptor in the catalytic mechanism. 218 to 219 (GS) contacts substrate.

Belongs to the diaminopimelate epimerase family. As to quaternary structure, homodimer.

Its subcellular location is the cytoplasm. The catalysed reaction is (2S,6S)-2,6-diaminopimelate = meso-2,6-diaminopimelate. Its pathway is amino-acid biosynthesis; L-lysine biosynthesis via DAP pathway; DL-2,6-diaminopimelate from LL-2,6-diaminopimelate: step 1/1. In terms of biological role, catalyzes the stereoinversion of LL-2,6-diaminopimelate (L,L-DAP) to meso-diaminopimelate (meso-DAP), a precursor of L-lysine and an essential component of the bacterial peptidoglycan. The sequence is that of Diaminopimelate epimerase from Blochmanniella floridana.